Consider the following 307-residue polypeptide: Membrane protein insertase YidC 2 (307 aa).

An N-terminal signal peptide occupies residues M1–G23. C24 is lipidated: N-palmitoyl cysteine. A lipid anchor (S-diacylglycerol cysteine) is attached at C24. A run of 5 helical transmembrane segments spans residues L58–L78, L135–F155, V179–V199, T209–L225, and L231–L251. Residues Y263–R307 are disordered. The span at Y271–Q288 shows a compositional bias: polar residues. Over residues K293–R307 the composition is skewed to basic residues.

This sequence belongs to the OXA1/ALB3/YidC family. Type 2 subfamily.

It is found in the cell membrane. Functionally, required for the insertion and/or proper folding and/or complex formation of integral membrane proteins into the membrane. Involved in integration of membrane proteins that insert both dependently and independently of the Sec translocase complex, as well as at least some lipoproteins. This Streptococcus pyogenes serotype M18 (strain MGAS8232) protein is Membrane protein insertase YidC 2.